The sequence spans 859 residues: Mismatch repair endonuclease PMS2 (859 aa).

Residues N45, D70, E109, A110, and L111 each coordinate ATP. Disordered regions lie at residues 391-413 (ELEK…ADEK), 427-455 (LHPT…RGVL), and 469-555 (RGSQ…KPED). Basic and acidic residues-rich tracts occupy residues 427 to 439 (LHPT…RGPE) and 485 to 495 (CMDREKIEKDS). Residues 512–525 (EVASSFSSDYNVSS) show a composition bias toward polar residues. The Nuclear localization signal motif lies at 574–577 (KRFK). The disordered stretch occupies residues 578–597 (TEERPSNVNISQRLPGPQST). Polar residues predominate over residues 583–597 (SNVNISQRLPGPQST).

The protein belongs to the DNA mismatch repair MutL/HexB family. As to quaternary structure, heterodimer of PMS2 and MLH1 (MutL alpha); this interaction is required for the stability of both partners. Forms a ternary complex with MutS alpha (MSH2-MSH6) or MutS beta (MSH2-MSH3). Part of the BRCA1-associated genome surveillance complex (BASC), which contains BRCA1, MSH2, MSH6, MLH1, ATM, BLM, PMS2 and the RAD50-MRE11-NBS1 protein complex. This association could be a dynamic process changing throughout the cell cycle and within subnuclear domains. Interacts with MTMR15/FAN1.

The protein resides in the nucleus. It carries out the reaction ATP + H2O = ADP + phosphate + H(+). Its function is as follows. Component of the post-replicative DNA mismatch repair system (MMR). Heterodimerizes with MLH1 to form MutL alpha. DNA repair is initiated by MutS alpha (MSH2-MSH6) or MutS beta (MSH2-MSH3) binding to a dsDNA mismatch, then MutL alpha is recruited to the heteroduplex. Assembly of the MutL-MutS-heteroduplex ternary complex in presence of RFC and PCNA is sufficient to activate endonuclease activity of PMS2. It introduces single-strand breaks near the mismatch and thus generates new entry points for the exonuclease EXO1 to degrade the strand containing the mismatch. DNA methylation would prevent cleavage and therefore assure that only the newly mutated DNA strand is going to be corrected. MutL alpha (MLH1-PMS2) interacts physically with the clamp loader subunits of DNA polymerase III, suggesting that it may play a role to recruit the DNA polymerase III to the site of the MMR. Also implicated in DNA damage signaling, a process which induces cell cycle arrest and can lead to apoptosis in case of major DNA damages. Possesses an ATPase activity, but in the absence of gross structural changes, ATP hydrolysis may not be necessary for proficient mismatch repair. The sequence is that of Mismatch repair endonuclease PMS2 from Mus musculus (Mouse).